Here is a 934-residue protein sequence, read N- to C-terminus: Sorting nexin-14 (934 aa).

2 helical membrane-spanning segments follow: residues 27 to 47 (YPVI…LNQY) and 48 to 68 (LHIL…YCSL). The 175-residue stretch at 129–303 (PSKVDASISE…MVLIFIDDSP (175 aa)) folds into the PXA domain. The RGS domain maps to 335-467 (DLKEIREQQD…CHSDEYFRHL (133 aa)). The 121-residue stretch at 557-677 (WTISIPYVDF…DFLSPFSMES (121 aa)) folds into the PX domain.

It belongs to the sorting nexin family.

Its subcellular location is the lysosome membrane. It localises to the late endosome membrane. It is found in the cell projection. The protein localises to the dendrite. Its function is as follows. Plays a role in maintaining normal neuronal excitability and synaptic transmission. May be involved in several stages of intracellular trafficking. Required for autophagosome clearance, possibly by mediating the fusion of lysosomes with autophagosomes. Binds phosphatidylinositol 3,5-bisphosphate (PtdIns(3,5)P2), a key component of late endosomes/lysosomes. Does not bind phosphatidylinositol 3-phosphate (PtdIns(3P)). This Danio rerio (Zebrafish) protein is Sorting nexin-14.